A 402-amino-acid polypeptide reads, in one-letter code: D-galactonate dehydratase family member RspA (402 aa).

Substrate contacts are provided by Asn37 and His122. Tyr159 functions as the Proton donor/acceptor in the catalytic mechanism. Residue Asp210 coordinates Mg(2+). The active-site Proton donor/acceptor is the His212. Residues Glu236 and Glu262 each coordinate Mg(2+). Glu262, Arg283, His312, Asp316, and Glu339 together coordinate substrate.

The protein belongs to the mandelate racemase/muconate lactonizing enzyme family. GalD subfamily. The cofactor is Mg(2+).

The enzyme catalyses D-mannonate = 2-dehydro-3-deoxy-D-gluconate + H2O. Has low D-mannonate dehydratase activity (in vitro), suggesting that this is not a physiological substrate and that it has no significant role in D-mannonate degradation in vivo. Has no detectable activity with a panel of 70 other acid sugars (in vitro). This Cellvibrio japonicus (strain Ueda107) (Pseudomonas fluorescens subsp. cellulosa) protein is D-galactonate dehydratase family member RspA (rspA).